The primary structure comprises 251 residues: Octanoyltransferase (251 aa).

A BPL/LPL catalytic domain is found at 29-216 (GVIQDTLLLL…NFGFIFKEQV (188 aa)). Substrate-binding positions include 74–81 (RGGDVTFH), 146–148 (AIG), and 159–161 (GFA). C177 acts as the Acyl-thioester intermediate in catalysis.

Belongs to the LipB family.

It localises to the cytoplasm. It catalyses the reaction octanoyl-[ACP] + L-lysyl-[protein] = N(6)-octanoyl-L-lysyl-[protein] + holo-[ACP] + H(+). It participates in protein modification; protein lipoylation via endogenous pathway; protein N(6)-(lipoyl)lysine from octanoyl-[acyl-carrier-protein]: step 1/2. Catalyzes the transfer of endogenously produced octanoic acid from octanoyl-acyl-carrier-protein onto the lipoyl domains of lipoate-dependent enzymes. Lipoyl-ACP can also act as a substrate although octanoyl-ACP is likely to be the physiological substrate. This chain is Octanoyltransferase, found in Koribacter versatilis (strain Ellin345).